Consider the following 396-residue polypeptide: Stearoyl-[acyl-carrier-protein] 9-desaturase 5, chloroplastic (396 aa).

A chloroplast-targeting transit peptide spans 1–29 (MAMAMDRIVFSPSSYVYRPCQARGSRSSR). 6 residues coordinate Fe cation: glutamate 137, glutamate 175, histidine 178, glutamate 228, glutamate 261, and histidine 264.

It belongs to the fatty acid desaturase type 2 family. In terms of assembly, homodimer. Fe(2+) is required as a cofactor. Ubiquitously expressed with a preference in leaves, flowers and stems.

It localises to the plastid. The protein localises to the chloroplast stroma. The enzyme catalyses octadecanoyl-[ACP] + 2 reduced [2Fe-2S]-[ferredoxin] + O2 + 2 H(+) = (9Z)-octadecenoyl-[ACP] + 2 oxidized [2Fe-2S]-[ferredoxin] + 2 H2O. The protein operates within lipid metabolism; fatty acid metabolism. Functionally, converts stearoyl-ACP to oleoyl-ACP by introduction of a cis double bond between carbons 9 and 10 of the acyl chain. This chain is Stearoyl-[acyl-carrier-protein] 9-desaturase 5, chloroplastic (S-ACP-DES5), found in Arabidopsis thaliana (Mouse-ear cress).